We begin with the raw amino-acid sequence, 714 residues long: Fatty acid oxidation complex subunit alpha (714 aa).

Positions M1 to P190 are enoyl-CoA hydratase. The segment at A306–Q714 is 3-hydroxyacyl-CoA dehydrogenase.

This sequence in the N-terminal section; belongs to the enoyl-CoA hydratase/isomerase family. It in the central section; belongs to the 3-hydroxyacyl-CoA dehydrogenase family. As to quaternary structure, heterotetramer of two alpha chains (FadJ) and two beta chains (FadI).

Its subcellular location is the cytoplasm. The catalysed reaction is a (3S)-3-hydroxyacyl-CoA = a (2E)-enoyl-CoA + H2O. It carries out the reaction a 4-saturated-(3S)-3-hydroxyacyl-CoA = a (3E)-enoyl-CoA + H2O. The enzyme catalyses a (3S)-3-hydroxyacyl-CoA + NAD(+) = a 3-oxoacyl-CoA + NADH + H(+). It catalyses the reaction (3S)-3-hydroxybutanoyl-CoA = (3R)-3-hydroxybutanoyl-CoA. Its pathway is lipid metabolism; fatty acid beta-oxidation. Catalyzes the formation of a hydroxyacyl-CoA by addition of water on enoyl-CoA. Also exhibits 3-hydroxyacyl-CoA epimerase and 3-hydroxyacyl-CoA dehydrogenase activities. The protein is Fatty acid oxidation complex subunit alpha of Escherichia coli O127:H6 (strain E2348/69 / EPEC).